Consider the following 624-residue polypeptide: Carbon monoxide dehydrogenase (624 aa).

The [4Fe-4S] cluster site is built by C37, C46, C49, C54, and C65. [Ni-4Fe-5S] cluster is bound by residues H256, C292, C336, C444, C475, and C516.

It belongs to the Ni-containing carbon monoxide dehydrogenase family. Homodimer. The cofactor is [4Fe-4S] cluster. [Ni-4Fe-5S] cluster serves as cofactor.

It carries out the reaction CO + 2 oxidized [2Fe-2S]-[ferredoxin] + H2O = 2 reduced [2Fe-2S]-[ferredoxin] + CO2 + 2 H(+). Functionally, CODH oxidizes carbon monoxide coupled, via CooF, to the reduction of a hydrogen cation by a hydrogenase (possibly CooH). The sequence is that of Carbon monoxide dehydrogenase (cooS) from Methanocaldococcus jannaschii (strain ATCC 43067 / DSM 2661 / JAL-1 / JCM 10045 / NBRC 100440) (Methanococcus jannaschii).